The chain runs to 145 residues: Lysozyme C (145 aa).

Residues 1-19 form the signal peptide; it reads MLFFGFLLAFLSAVPGTEG. One can recognise a C-type lysozyme domain in the interval 20-145; sequence EIIPRCELVK…RDLSSYVKGC (126 aa). 4 disulfides stabilise this stretch: cysteine 25–cysteine 145, cysteine 49–cysteine 133, cysteine 82–cysteine 98, and cysteine 94–cysteine 112. Residues glutamate 54 and aspartate 70 contribute to the active site.

This sequence belongs to the glycosyl hydrolase 22 family. In terms of assembly, monomer.

The protein resides in the secreted. It catalyses the reaction Hydrolysis of (1-&gt;4)-beta-linkages between N-acetylmuramic acid and N-acetyl-D-glucosamine residues in a peptidoglycan and between N-acetyl-D-glucosamine residues in chitodextrins.. Its function is as follows. Lysozymes have primarily a bacteriolytic function; those in tissues and body fluids are associated with the monocyte-macrophage system and enhance the activity of immunoagents. This Opisthocomus hoazin (Hoatzin) protein is Lysozyme C (LYZ).